Consider the following 347-residue polypeptide: Extracellular exo-alpha-(1-&gt;5)-L-arabinofuranosidase ArbA (347 aa).

An N-terminal signal peptide occupies residues 1–31; that stretch reads MPTHHPITRQHWHHSWLSALALLCASLACGA. Asp35 contributes to the substrate binding site. Asp38 functions as the Proton acceptor in the catalytic mechanism. Substrate contacts are provided by residues 90–92, 115–116, Asn155, Ser175, and Glu221; these read DGH and GK. Residue Glu221 is the Proton donor of the active site. His291 serves as a coordination point for Ca(2+). Gln316 lines the substrate pocket.

The protein belongs to the glycosyl hydrolase 43 family. Homodimer.

The protein resides in the secreted. It catalyses the reaction Hydrolysis of terminal non-reducing alpha-L-arabinofuranoside residues in alpha-L-arabinosides.. It participates in glycan metabolism; L-arabinan degradation. In terms of biological role, involved in the degradation of arabinan and is a key enzyme in the complete degradation of the plant cell wall. Catalyzes the cleavage of the terminal alpha-(1-&gt;5)-arabinofuranosyl bonds of linear arabinan and carboxymethylarabinan to produce almost exclusively arabinotriose. This Cellvibrio japonicus (strain Ueda107) (Pseudomonas fluorescens subsp. cellulosa) protein is Extracellular exo-alpha-(1-&gt;5)-L-arabinofuranosidase ArbA (arbA).